A 631-amino-acid chain; its full sequence is MPTTFQEIPRERPVTPLLDRADTPAGLRRLAEADLETLADELRQDLLYTVGQTGGHFGAGLGVIELTIALHYVFDTPDDRLVWDVGHQAYPHKILTGRRDRMLSLRQKDGIAAFPRRSESEYDTFGVGHSSTSISAALGMAIAARLQNDPRKSIAVIGDGALTAGMAFEALNHAQEVDANMLVILNDNDMSISRNVGGLSNYLAKILSSRTYASMREGSKKVLSRLPGAWEIARRTEEYAKGMLVPGTLFEELGWNYIGPIDGHDLPTLIATLRNMRDLKGPQFLHVVTKKGKGFAPAEVDPIGYHAITKLEPADKPVAPKKPSGPKYSAVFGQWLCDMAAADNRLVGITPAMKEGSDLVDFSERYPERYFDVAIAEQHAVTFAAGMACEGAKPVVAIYSTFLQRAYDQLIHDVAVQDLDVLFAIDRAGLVGEDGPTHAGAYDLSYLRCIPGMLVMTPSDENELRKMLSTGHHYKGPAAVRYPRGTGPNAPISGDLEPLEIGKGVVRRQGGKVALLVFGVQLTEALQVAEQIDATVVDMRFVKPLDEALVLEMAAGHELLVTIEENAIMGGAGAAVGEFLAREGVVKPLLHLGLPDIYVEHAKPAQMLAECGLDAAGIEASVKARMAKLGL.

Thiamine diphosphate contacts are provided by residues histidine 87 and 128 to 130 (GHS). Residue aspartate 159 coordinates Mg(2+). Residues 160-161 (GA), asparagine 188, phenylalanine 295, and glutamate 377 contribute to the thiamine diphosphate site. Asparagine 188 contributes to the Mg(2+) binding site.

Belongs to the transketolase family. DXPS subfamily. In terms of assembly, homodimer. Mg(2+) serves as cofactor. Thiamine diphosphate is required as a cofactor.

The catalysed reaction is D-glyceraldehyde 3-phosphate + pyruvate + H(+) = 1-deoxy-D-xylulose 5-phosphate + CO2. It functions in the pathway metabolic intermediate biosynthesis; 1-deoxy-D-xylulose 5-phosphate biosynthesis; 1-deoxy-D-xylulose 5-phosphate from D-glyceraldehyde 3-phosphate and pyruvate: step 1/1. Functionally, catalyzes the acyloin condensation reaction between C atoms 2 and 3 of pyruvate and glyceraldehyde 3-phosphate to yield 1-deoxy-D-xylulose-5-phosphate (DXP). In Pseudomonas entomophila (strain L48), this protein is 1-deoxy-D-xylulose-5-phosphate synthase.